Here is a 106-residue protein sequence, read N- to C-terminus: Ribulose bisphosphate carboxylase small subunit (106 aa).

It belongs to the RuBisCO small chain family. Heterohexadecamer of 8 large and 8 small subunits.

It is found in the plastid. It localises to the cyanelle. In terms of biological role, ruBisCO catalyzes two reactions: the carboxylation of D-ribulose 1,5-bisphosphate, the primary event in carbon dioxide fixation, as well as the oxidative fragmentation of the pentose substrate. Both reactions occur simultaneously and in competition at the same active site. Although the small subunit is not catalytic it is essential for maximal activity. This is Ribulose bisphosphate carboxylase small subunit from Cyanophora paradoxa.